We begin with the raw amino-acid sequence, 370 residues long: Galanin receptor type 3 (370 aa).

Residues methionine 1 to valine 20 are Extracellular-facing. Asparagine 6 carries N-linked (GlcNAc...) asparagine glycosylation. A helical transmembrane segment spans residues proline 21–valine 41. The Cytoplasmic portion of the chain corresponds to leucine 42–threonine 57. The chain crosses the membrane as a helical span at residues aspartate 58 to phenylalanine 78. Over glutamine 79–lysine 96 the chain is Extracellular. Cysteines 95 and 172 form a disulfide. The helical transmembrane segment at threonine 97 to valine 118 threads the bilayer. The Cytoplasmic segment spans residues aspartate 119 to asparagine 138. Residues alanine 139–serine 159 form a helical membrane-spanning segment. The Extracellular portion of the chain corresponds to tyrosine 160–leucine 184. The chain crosses the membrane as a helical span at residues aspartate 185–glycine 205. Over arginine 206–alanine 236 the chain is Cytoplasmic. Residues methionine 237–cysteine 257 traverse the membrane as a helical segment. Topologically, residues phenylalanine 258–tryptophan 259 are extracellular. A helical transmembrane segment spans residues tyrosine 260–alanine 280. Residues tyrosine 281–glutamine 370 lie on the Cytoplasmic side of the membrane. Cysteine 308 carries the S-palmitoyl cysteine lipid modification. The interval glutamine 328–glutamine 370 is disordered. The segment covering proline 350–glutamate 359 has biased composition (basic and acidic residues).

This sequence belongs to the G-protein coupled receptor 1 family.

The protein localises to the cell membrane. Receptor for the hormone galanin and spexin-1. The chain is Galanin receptor type 3 (Galr3) from Mus musculus (Mouse).